We begin with the raw amino-acid sequence, 349 residues long: 2-oxoglutarate-Fe(II) type oxidoreductase hxnY (349 aa).

The 105-residue stretch at 178 to 282 (GVATMRMLHY…RYSIPFFFSG (105 aa)) folds into the Fe2OG dioxygenase domain. Fe cation is bound by residues His205, Asp207, and His263. Residue Arg273 participates in 2-oxoglutarate binding.

The protein belongs to the iron/ascorbate-dependent oxidoreductase family. Fe(2+) is required as a cofactor.

2-oxoglutarate-Fe(II) type oxidoreductase, part of the hnx cluster involved in the purine degradation. The nicotinate hydroxylase hnxS accepts nicotinate as a substrate and catalyzes the first step of nicotinate catabolism. The major facilitator-type transporters hxnP and hxnZ are probably involved in the uptake of nicotinate-derived metabolites, and the oxidoreductases hxnT and hxnY in the further metabolism of 6-OH nicotinic acid. This Emericella nidulans (strain FGSC A4 / ATCC 38163 / CBS 112.46 / NRRL 194 / M139) (Aspergillus nidulans) protein is 2-oxoglutarate-Fe(II) type oxidoreductase hxnY.